The sequence spans 445 residues: UDP-N-acetylmuramate--L-alanine ligase (445 aa).

113–119 (GSHGKTS) provides a ligand contact to ATP.

The protein belongs to the MurCDEF family.

It is found in the cytoplasm. The catalysed reaction is UDP-N-acetyl-alpha-D-muramate + L-alanine + ATP = UDP-N-acetyl-alpha-D-muramoyl-L-alanine + ADP + phosphate + H(+). It functions in the pathway cell wall biogenesis; peptidoglycan biosynthesis. Functionally, cell wall formation. The polypeptide is UDP-N-acetylmuramate--L-alanine ligase (Enterococcus faecalis (strain ATCC 700802 / V583)).